We begin with the raw amino-acid sequence, 392 residues long: F-box/kelch-repeat protein At4g39550 (392 aa).

The segment covering 1–12 (MSSPEKKRKTTK) has biased composition (basic residues). Positions 1-27 (MSSPEKKRKTTKKPSPTPQSTTPNPSL) are disordered. The segment covering 18 to 27 (PQSTTPNPSL) has biased composition (low complexity). In terms of domain architecture, F-box spans 21–67 (TTPNPSLPDDLVVSCLARVSRLYYPTLSLVSKSFRSLIASPDLYKTR). Kelch repeat units follow at residues 148 to 194 (NIYN…VVEG), 195 to 242 (KIYV…KSAV), and 244 to 285 (EGEI…VVEN).

As to quaternary structure, part of a SCF (ASK-cullin-F-box) protein ligase complex. Interacts with ASK13 and ASK14.

Its pathway is protein modification; protein ubiquitination. Its function is as follows. Component of SCF(ASK-cullin-F-box) E3 ubiquitin ligase complexes, which may mediate the ubiquitination and subsequent proteasomal degradation of target proteins. The polypeptide is F-box/kelch-repeat protein At4g39550 (Arabidopsis thaliana (Mouse-ear cress)).